The sequence spans 497 residues: Aspartyl/glutamyl-tRNA(Asn/Gln) amidotransferase subunit B (497 aa).

It belongs to the GatB/GatE family. GatB subfamily. In terms of assembly, heterotrimer of A, B and C subunits.

It catalyses the reaction L-glutamyl-tRNA(Gln) + L-glutamine + ATP + H2O = L-glutaminyl-tRNA(Gln) + L-glutamate + ADP + phosphate + H(+). It carries out the reaction L-aspartyl-tRNA(Asn) + L-glutamine + ATP + H2O = L-asparaginyl-tRNA(Asn) + L-glutamate + ADP + phosphate + 2 H(+). Allows the formation of correctly charged Asn-tRNA(Asn) or Gln-tRNA(Gln) through the transamidation of misacylated Asp-tRNA(Asn) or Glu-tRNA(Gln) in organisms which lack either or both of asparaginyl-tRNA or glutaminyl-tRNA synthetases. The reaction takes place in the presence of glutamine and ATP through an activated phospho-Asp-tRNA(Asn) or phospho-Glu-tRNA(Gln). The sequence is that of Aspartyl/glutamyl-tRNA(Asn/Gln) amidotransferase subunit B from Cutibacterium acnes (strain DSM 16379 / KPA171202) (Propionibacterium acnes).